Reading from the N-terminus, the 299-residue chain is Glycine--tRNA ligase alpha subunit (299 aa).

It belongs to the class-II aminoacyl-tRNA synthetase family. As to quaternary structure, tetramer of two alpha and two beta subunits.

It localises to the cytoplasm. It catalyses the reaction tRNA(Gly) + glycine + ATP = glycyl-tRNA(Gly) + AMP + diphosphate. In Dictyoglomus turgidum (strain DSM 6724 / Z-1310), this protein is Glycine--tRNA ligase alpha subunit.